The primary structure comprises 734 residues: Terpene cyclase/mutase ntnI (734 aa).

Residues 1–12 (MQSHIGQWTSTA) show a composition bias toward polar residues. Residues 1 to 26 (MQSHIGQWTSTAKGHLSRDENGDEKT) are disordered. A compositionally biased stretch (basic and acidic residues) spans 16 to 26 (LSRDENGDEKT). 4 PFTB repeats span residues 130-172 (AIEI…RLLG), 493-534 (LHNA…SGKT), 570-610 (RTRG…ALAG), and 619-668 (SRKG…GLMH).

This sequence belongs to the terpene cyclase/mutase family.

It functions in the pathway secondary metabolite biosynthesis; terpenoid biosynthesis. Its function is as follows. Terpene cyclase/mutase; part of the gene cluster that mediates the biosynthesis of the meroterpenoids nectripenoids A and B, as well as cochliquninone D and isocochliquninone E. The pathway probably begins with the HR-PKS ntnH that catalyzes two chain-extension steps to form a reduced triketide, which then primes the SAT domain in the NR-PKS ntnG to initiate three more cycles of extension to give a linear hexaketide corresponding to the polyketide part of nectripenoids. The FAD-dependent monooxygenase ntnJ then performs an oxidative decarboxylation at C11 of the ntnH/ntnG product, via an electrophilic aromatic hydroxylation with concomitant ipso-decarboxylation. The membrane-bound polyprenyl transferase ntnF then introduces a farnesyl group before the FAD-dependent monooxygenase ntnK functions as the first epoxidase on terminal C12'-C13' olefin, followed by a second epoxidation on C7'-C8' catalyzed by ntnA. The terpene cyclase/mutase ntnI then initiates the sequential tricyclic ring formation through protonation of the terminal epoxide and catalyzes the regioselective and stereoselective 6/6/6-tricyclic ring formation. The cytochrome P450 monooxygenase ntnM may then hydroxylate C1'. The chain is Terpene cyclase/mutase ntnI from Nectria sp.